Reading from the N-terminus, the 72-residue chain is UPF0154 protein RBAM_017710 (72 aa).

Residues 4–24 (WVGILVGVVALLIGVALGFFI) form a helical membrane-spanning segment.

Belongs to the UPF0154 family.

Its subcellular location is the cell membrane. The chain is UPF0154 protein RBAM_017710 from Bacillus velezensis (strain DSM 23117 / BGSC 10A6 / LMG 26770 / FZB42) (Bacillus amyloliquefaciens subsp. plantarum).